A 194-amino-acid chain; its full sequence is Glycerol-3-phosphate acyltransferase (194 aa).

The next 5 helical transmembrane spans lie at 3–23 (IALL…LIVG), 47–67 (VLGK…GVLP), 78–97 (IHGI…PIYL), 112–132 (ILGV…TLLF), and 153–173 (LFFD…LIII).

This sequence belongs to the PlsY family. As to quaternary structure, probably interacts with PlsX.

It is found in the cell membrane. The enzyme catalyses an acyl phosphate + sn-glycerol 3-phosphate = a 1-acyl-sn-glycero-3-phosphate + phosphate. The protein operates within lipid metabolism; phospholipid metabolism. Catalyzes the transfer of an acyl group from acyl-phosphate (acyl-PO(4)) to glycerol-3-phosphate (G3P) to form lysophosphatidic acid (LPA). This enzyme utilizes acyl-phosphate as fatty acyl donor, but not acyl-CoA or acyl-ACP. This chain is Glycerol-3-phosphate acyltransferase, found in Macrococcus caseolyticus (strain JCSC5402) (Macrococcoides caseolyticum).